A 246-amino-acid polypeptide reads, in one-letter code: Bis(5'-nucleosyl)-tetraphosphatase PrpE [asymmetrical] (246 aa).

The protein belongs to the PrpE family. It depends on Ni(2+) as a cofactor.

It catalyses the reaction P(1),P(4)-bis(5'-guanosyl) tetraphosphate + H2O = GMP + GTP + 2 H(+). Functionally, asymmetrically hydrolyzes Ap4p to yield AMP and ATP. This Bacillus mycoides (strain KBAB4) (Bacillus weihenstephanensis) protein is Bis(5'-nucleosyl)-tetraphosphatase PrpE [asymmetrical].